A 180-amino-acid polypeptide reads, in one-letter code: Ribosome maturation factor RimM (180 aa).

The PRC barrel domain maps to 108–180 (PDEYYWVDLE…LIVVDWDPDF (73 aa)).

The protein belongs to the RimM family. Binds ribosomal protein uS19.

Its subcellular location is the cytoplasm. Its function is as follows. An accessory protein needed during the final step in the assembly of 30S ribosomal subunit, possibly for assembly of the head region. Essential for efficient processing of 16S rRNA. May be needed both before and after RbfA during the maturation of 16S rRNA. It has affinity for free ribosomal 30S subunits but not for 70S ribosomes. This is Ribosome maturation factor RimM from Xanthomonas euvesicatoria pv. vesicatoria (strain 85-10) (Xanthomonas campestris pv. vesicatoria).